The chain runs to 118 residues: Hydrogenase maturation factor HypA (118 aa).

H2 provides a ligand contact to Ni(2+). Residues C73, C76, C90, and C93 each contribute to the Zn(2+) site.

This sequence belongs to the HypA/HybF family.

Functionally, involved in the maturation of [NiFe] hydrogenases. Required for nickel insertion into the metal center of the hydrogenase. The sequence is that of Hydrogenase maturation factor HypA from Salmonella typhi.